The following is a 408-amino-acid chain: Imidazolonepropionase (408 aa).

Fe(3+) contacts are provided by H73 and H75. H73 and H75 together coordinate Zn(2+). 4-imidazolone-5-propanoate contacts are provided by R82, Y145, and H178. Residue Y145 coordinates N-formimidoyl-L-glutamate. H243 provides a ligand contact to Fe(3+). Residue H243 coordinates Zn(2+). A 4-imidazolone-5-propanoate-binding site is contributed by Q246. D318 provides a ligand contact to Fe(3+). Position 318 (D318) interacts with Zn(2+). N-formimidoyl-L-glutamate-binding residues include N320 and G322. Residue S323 coordinates 4-imidazolone-5-propanoate.

The protein belongs to the metallo-dependent hydrolases superfamily. HutI family. The cofactor is Zn(2+). Fe(3+) serves as cofactor.

The protein localises to the cytoplasm. It catalyses the reaction 4-imidazolone-5-propanoate + H2O = N-formimidoyl-L-glutamate. The protein operates within amino-acid degradation; L-histidine degradation into L-glutamate; N-formimidoyl-L-glutamate from L-histidine: step 3/3. Functionally, catalyzes the hydrolytic cleavage of the carbon-nitrogen bond in imidazolone-5-propanoate to yield N-formimidoyl-L-glutamate. It is the third step in the universal histidine degradation pathway. In Shewanella oneidensis (strain ATCC 700550 / JCM 31522 / CIP 106686 / LMG 19005 / NCIMB 14063 / MR-1), this protein is Imidazolonepropionase.